The following is an 84-amino-acid chain: Large ribosomal subunit protein bL27 (84 aa).

The disordered stretch occupies residues 1–23 (MAHKKGASSSRNGRESAAQRLGV).

Belongs to the bacterial ribosomal protein bL27 family.

The polypeptide is Large ribosomal subunit protein bL27 (Salinispora arenicola (strain CNS-205)).